Here is a 410-residue protein sequence, read N- to C-terminus: LIMR family protein SELMODRAFT_432208 (410 aa).

The next 5 helical transmembrane spans lie at 30 to 50 (LWWAVYIIDTVLVIPFAIFFY), 67 to 87 (LWVVILLTVFCLLLGILYAVI), 129 to 149 (VTLMVSLFFYIFPFFIDLTTL), 156 to 176 (ICLDLWLKLSVTYVITLNTII), and 179 to 199 (ILFMMFGGVGMATLPLSLIFA). Residues 245 to 274 (RMFRKNVKKVQQELVFLEDDVEALNEAFPQ) adopt a coiled-coil conformation. The next 2 helical transmembrane spans lie at 288–308 (LVFGIVGLALSIIWLLHIIVF) and 330–350 (GGLLGTTTFAIFCYYLVMSVI). Residues 389–400 (PSSAMDSSSWSA) show a composition bias toward low complexity. The segment at 389-410 (PSSAMDSSSWSADRPCRPWPWP) is disordered.

It belongs to the LIMR family.

Its subcellular location is the membrane. The protein is LIMR family protein SELMODRAFT_432208 of Selaginella moellendorffii (Spikemoss).